Consider the following 1865-residue polypeptide: Dedicator of cytokinesis protein 1 (1865 aa).

The SH3 domain occupies 9–70 (REEKYGVAFY…PASYIHLKEA (62 aa)). Positions 425 to 609 (RNDIYVTLVQ…DSFQISTLVC (185 aa)) constitute a C2 DOCK-type domain. A DOCKER domain is found at 1207-1617 (YKEIEREEMY…VEKQYGVRTM (411 aa)). The interval 1613-1723 (GVRTMPSGLD…FKPADSSLQQ (111 aa)) is disordered. Over residues 1639-1664 (PSSSRPLSVASVSSFSSDSTPSRPGS) the composition is skewed to low complexity. A compositionally biased stretch (basic and acidic residues) spans 1680–1694 (RSQDKLDKDDPDKEK). A Phosphoserine modification is found at S1681. The segment at 1687-1695 (KDDPDKEKK) is phosphoinositide-binding. The segment covering 1695–1704 (KDKKKEKRNS) has biased composition (basic residues). Positions 1705 to 1716 (KHQEIFDKEFKP) are enriched in basic and acidic residues. Phosphoserine is present on residues S1743, S1756, S1761, and S1764. Disordered regions lie at residues 1753–1778 (RRFS…AKLS) and 1801–1865 (PLPL…GIVQ). The segment covering 1756–1766 (SVSPASPSSQQ) has biased composition (low complexity). Phosphothreonine is present on residues T1767 and T1772. The interaction with NCK2 second and third SH3 domain (minor) stretch occupies residues 1793–1819 (MDVADVPPPLPLKGNMADYGNLMENQD). The SH3-binding; interaction with CRK signature appears at 1799–1805 (PPPLPLK). Positions 1820 to 1836 (MMVSPTSPPPPPPQRQQ) are interaction with NCK2 third SH3 domain (major). Residues 1825-1851 (TSPPPPPPQRQQPPPLPSKTPPPPPPK) are compositionally biased toward pro residues. The interval 1837–1852 (PPPLPSKTPPPPPPKT) is interaction with NCK2 (minor). An SH3-binding; interaction with CRK motif is present at residues 1838-1843 (PPLPSK). The residue at position 1858 (S1858) is a Phosphoserine.

Belongs to the DOCK family. In terms of assembly, interacts with the SH3 domains of CRK and NCK2 via multiple sites. Interacts with nucleotide-free RAC1 via its DOCKER domain. Interacts with ELMO1, ELMO2 and probably ELMO3 via its SH3 domain. Interacts with RAC1. Interacts with ELMO1 and ADGRB1. Identified in a complex with AUTS2 and ELMO2.

The protein resides in the cytoplasm. Its subcellular location is the membrane. Functionally, involved in cytoskeletal rearrangements required for phagocytosis of apoptotic cells and cell motility. Along with DOCK1, mediates CRK/CRKL regulation of epithelial and endothelial cell spreading and migration on type IV collagen. Functions as a guanine nucleotide exchange factor (GEF), which activates Rac Rho small GTPases by exchanging bound GDP for free GTP. Its GEF activity may be enhanced by ELMO1. The sequence is that of Dedicator of cytokinesis protein 1 (Dock1) from Mus musculus (Mouse).